Reading from the N-terminus, the 608-residue chain is Auxin response factor 3 (608 aa).

The disordered stretch occupies residues 1–40; the sequence is MGGLIDLNVMETEEDETQTQTPSSASGSVSPTSSSSASVS. Over residues 18–40 the composition is skewed to low complexity; the sequence is QTQTPSSASGSVSPTSSSSASVS. The segment at residues 159–261 is a DNA-binding region (TF-B3); the sequence is FCKTLTASDT…KLRLGVRRAS (103 aa).

It belongs to the ARF family. Homo and heterodimers. In terms of tissue distribution, expressed in the whole plant.

It localises to the nucleus. Auxin response factors (ARFs) are transcriptional factors that bind specifically to the DNA sequence 5'-TGTCTC-3' found in the auxin-responsive promoter elements (AuxREs). Could act as transcriptional activator or repressor. Formation of heterodimers with Aux/IAA proteins may alter their ability to modulate early auxin response genes expression. Involved in the establishment or elaboration of tissue patterning during gynoecial development. This is Auxin response factor 3 (ARF3) from Arabidopsis thaliana (Mouse-ear cress).